The sequence spans 160 residues: CXXC motif containing zinc binding protein (160 aa).

Cys-33, Cys-36, Cys-67, and Cys-70 together coordinate Zn(2+). Ser-75 is modified (phosphoserine).

Belongs to the UPF0587 family. In terms of assembly, monomer.

The chain is CXXC motif containing zinc binding protein from Homo sapiens (Human).